Consider the following 85-residue polypeptide: Conotoxin Lv15a (85 aa).

A signal peptide spans Met1 to Ser23. The propeptide occupies Gly24 to Arg49. At Gln50 the chain carries Pyrrolidone carboxylic acid.

It belongs to the conotoxin O2 superfamily. Post-translationally, contains 4 disulfide bonds. In terms of tissue distribution, expressed by the venom duct.

It is found in the secreted. This is Conotoxin Lv15a from Conus lividus (Livid cone).